Consider the following 315-residue polypeptide: 1-aminocyclopropane-1-carboxylate oxidase 1 (315 aa).

A Fe2OG dioxygenase domain is found at proline 153 to proline 253. Fe cation is bound by residues histidine 177, aspartate 179, and histidine 234.

It belongs to the iron/ascorbate-dependent oxidoreductase family. Fe cation is required as a cofactor. In terms of tissue distribution, predominantly expressed in the petals and the stigma and style.

It catalyses the reaction 1-aminocyclopropane-1-carboxylate + L-ascorbate + O2 = ethene + L-dehydroascorbate + hydrogen cyanide + CO2 + 2 H2O. Its pathway is alkene biosynthesis; ethylene biosynthesis via S-adenosyl-L-methionine; ethylene from S-adenosyl-L-methionine: step 2/2. This chain is 1-aminocyclopropane-1-carboxylate oxidase 1 (ACO1), found in Solanum lycopersicum (Tomato).